The primary structure comprises 202 residues: Coiled-coil domain-containing protein 85B (202 aa).

Residue methionine 1 is modified to N-acetylmethionine. Coiled-coil stretches lie at residues 43–90 (GRLM…ERQR) and 118–147 (QKLA…LGEE). A disordered region spans residues 148–202 (WGPRGGPSGAGGSGAGPAPELALPPCGPRDLGDGSSSTGSVGSPDQLPLACSPDD). The segment covering 150–162 (PRGGPSGAGGSGA) has biased composition (gly residues). Over residues 180–190 (DGSSSTGSVGS) the composition is skewed to low complexity.

Belongs to the CCDC85 family. In terms of assembly, interacts with CEBPB. Interacts with EURL. May interact with CEBPD. Interacts with MCRS1. Interacts with TCF7L2; competes with CTNNB1. Interacts with ANKRD26. Interacts with the beta-catenin family proteins ARVCF, CTNND1, CTNND2 and PKP4. As to quaternary structure, (Microbial infection) Interacts with the viral phosphoprotein hepatitis delta antigen (HDAG); this interaction affects hepatitis delta virus (HDV) genomic replication in intact cells. Widely expressed including liver.

It is found in the nucleus. The protein resides in the cytoplasm. The protein localises to the cytoskeleton. Its subcellular location is the microtubule organizing center. It localises to the centrosome. It is found in the cell junction. The protein resides in the adherens junction. Its function is as follows. Functions as a transcriptional repressor. May inhibit the activity of CTNNB1 in a TP53-dependent manner and thus regulate cell growth. May function in adipocyte differentiation, negatively regulating mitotic clonal expansion. Plays a role in cell-cell adhesion and epithelium development through its interaction with proteins of the beta-catenin family. (Microbial infection) Plays a role in hepatitis delta virus (HDV) genomic replication. The polypeptide is Coiled-coil domain-containing protein 85B (CCDC85B) (Homo sapiens (Human)).